Reading from the N-terminus, the 1103-residue chain is MATLKQIQFKRSKTAGQRPAASVLAEGELAINLKDRVLFTKDDQGNIIDLGFAKGGSIDGNVIHKGNYNQTGDYTLNGTFTQTGNFNLTGIARVTRDIIAAGQIMTEGGELITKSSGTAHVRFHDSADRERGIIFSPANDGLTTQVVNIRVRDYKASSESTFAFNGNGLFSSPEVFGWKSVSTPVIYTNKVITNKKVKDDYDIYSMADNVPLSEITTAINHLRVMRNAVGSGIFHEVKDNDGITWYSGDGLDAYLWSFTWSGGIKSSHSISIGLTPGPKDYSILGPSSIALGDNDTGFKWHQDGYYFSVNNGTKTFLFSPSETTSLRKFVAGYSTNGTDLTTPPTENYALATVVTYHDNNAFGDGQTLLGYYQGGNYHHYFRGKGTTNINTHGGLLVTPGIIDVIGGSVNIDGRNNASTAMFKGNTTGSSSVDNMTISVWGNTFTNPSEGNRKNVMEISDATSWMSYIQRLTTGEVEMNVNGSFESSGVTAGNRGVHTTGEISSGAVNALRIWNADYGVIFRRSEGSLHIIPTAYGEGKNGDIGPLRPFSIALDTGKVVIPDLESSYNTFAANGYIKFAGHGAGAGGYDIQYSQAAPIFQEIDDAAVSKYYPIVKQKFLNGKAVWSLGTEINSGTFVLHHLKEDGSQGHTSRFNADGTVNFPDNVQVGGGEATIARNGNIFSDIWKTFTSAGETTNIRDAIATRVSKEGDTMTGKLTLSAGNDALVLTAGEGASSHIRSDVGGTNNWYIGKGSGDNGLGFYSYITQGGVYITNNGEIALSPQGQGTFNFNRDRLHINGTQWTAHQGGGWENQWNQEAPIFIDFGNVGNDSYYPIIKGKSGITNEGYISGVDFGMRRITNTWAQGIIRVGNQENGSDPQAIYEFHHNGVLYVPNMVKAGARLSAGGGDPVWQGACVVIGDNDTGLVHGGDGRINMVANGMHIASWSSAYHLHEGLWDTTGALWTEQGRAIISFGHLVQQSDAYSTFVRDVYVRSDIRVKKDLVKFENASEKLSKINGYTYMQKRGLDEEGNQKWEPNAGLIAQEVQAILPELVEGDPDGERLLRLNYNGVIGLNTAAINEHTAEIAELKSEIEELKKIVKSLLK.

Residues 988 to 991 (DVYV) are interaction with the receptor-recognizing protein gp38. The 99-residue stretch at 993–1091 (SDIRVKKDLV…AEIAELKSEI (99 aa)) folds into the Peptidase S74 domain.

Belongs to the S16-like long tail fiber protein Gp37 family. As to quaternary structure, homotrimer. Interacts with the receptor-recognizing protein Gp38. Post-translationally, proteolytic cleavage and release of the chaperone in the host cytosol stabilizes the folded protein.

It localises to the virion. Functionally, constitues the trimeric tip of the long tail fiber that mediates the attachment to the host receptor, together with the receptor-recognizing protein Gp38. The C-terminal chaperone protein mediates homotrimerization and proper folding of the catalytic trimer. In Escherichia coli O157:H7 (Bacteriophage AR1), this protein is Long tail fiber protein Gp37 (37).